We begin with the raw amino-acid sequence, 184 residues long: Ribosome-recycling factor (184 aa).

This sequence belongs to the RRF family.

It is found in the cytoplasm. Responsible for the release of ribosomes from messenger RNA at the termination of protein biosynthesis. May increase the efficiency of translation by recycling ribosomes from one round of translation to another. The sequence is that of Ribosome-recycling factor from Caldicellulosiruptor saccharolyticus (strain ATCC 43494 / DSM 8903 / Tp8T 6331).